The sequence spans 250 residues: MEREGLEWIVAFLRMLVSWGASCAMIFGGVVPYIPQYRDIRRTQNAEGFSIYVCLMLLIANILRILFWFGHHFESPLLWQSIIMIVTMLLMLKLCTEVRVANELNPKRRSFTDFDTAFFWHWTRFIDFIQCVLAFTGVTGYITYLLLDSPLFVEILGFLAVFTEALLGVPQLYRNHQNYSTEGMSIKMVLMWTSGDTFKSAYFVLNQAPFQFSICGLLQVFVDIAILLQVYLYSAYPQKPVSHATSAKAL.

The PQ-loop 1 domain maps to 14–80 (RMLVSWGASC…HHFESPLLWQ (67 aa)). 6 helical membrane passes run 15-35 (MLVSWGASCAMIFGGVVPYIP), 49-69 (FSIYVCLMLLIANILRILFWF), 72-92 (HFESPLLWQSIIMIVTMLLML), 118-138 (FFWHWTRFIDFIQCVLAFTGV), 151-173 (LFVEILGFLAVFTEALLGVPQLY), and 212-232 (FSICGLLQVFVDIAILLQVYL). The PQ-loop 2 domain occupies 149–215 (SPLFVEILGF…NQAPFQFSIC (67 aa)).

Its subcellular location is the membrane. The protein is Solute carrier family 66 member 2 (slc66a2) of Xenopus laevis (African clawed frog).